The primary structure comprises 338 residues: Glyceraldehyde-3-phosphate dehydrogenase (338 aa).

NAD(+)-binding positions include 13 to 14 (RI), Asp-35, and Arg-80. Residues 151 to 153 (SCT), Thr-182, 211 to 212 (TG), and Arg-234 contribute to the D-glyceraldehyde 3-phosphate site. Cys-152 functions as the Nucleophile in the catalytic mechanism. Asn-316 is a binding site for NAD(+).

The protein belongs to the glyceraldehyde-3-phosphate dehydrogenase family. Homotetramer.

It is found in the cytoplasm. The enzyme catalyses D-glyceraldehyde 3-phosphate + phosphate + NAD(+) = (2R)-3-phospho-glyceroyl phosphate + NADH + H(+). It participates in carbohydrate degradation; glycolysis; pyruvate from D-glyceraldehyde 3-phosphate: step 1/5. In Colletotrichum gloeosporioides (Anthracnose fungus), this protein is Glyceraldehyde-3-phosphate dehydrogenase (GPDA).